The sequence spans 216 residues: Ras-related protein RABA1c (216 aa).

A GTP-binding site is contributed by 20–27 (GDSGVGKS). The Effector region motif lies at 42–50 (SKSTIGVEF). Residues 68-72 (DTAGQ), 126-129 (NKSD), and 156-157 (SA) contribute to the GTP site. 2 S-geranylgeranyl cysteine lipidation sites follow: Cys-213 and Cys-214.

The protein belongs to the small GTPase superfamily. Rab family.

The protein resides in the cell membrane. Intracellular vesicle trafficking and protein transport. The polypeptide is Ras-related protein RABA1c (RABA1C) (Arabidopsis thaliana (Mouse-ear cress)).